Consider the following 104-residue polypeptide: uncharacterized protein (104 aa).

The segment at 62–92 is disordered; the sequence is SSPAASSHPRKRGKEKKERTPTERLAAPARK.

This is an uncharacterized protein from Human adenovirus B serotype 7 (HAdV-7).